Consider the following 149-residue polypeptide: MQIILLDKVANLGSLGDQVNVKSGYARNYLIPQGKAVSATKKNIEFFEARRAELEAKLAETLAAAEARAAKITALGSVTISSKAGDEGKLFGSIGTRDIADAVTAAGVEICKSEVRLPNGVLRTTGDHEVHFQVHSDVFAELNVIIVAE.

It belongs to the bacterial ribosomal protein bL9 family.

Binds to the 23S rRNA. The polypeptide is Large ribosomal subunit protein bL9 (Proteus mirabilis (strain HI4320)).